Consider the following 142-residue polypeptide: Large ribosomal subunit protein uL11 (142 aa).

This sequence belongs to the universal ribosomal protein uL11 family. Part of the ribosomal stalk of the 50S ribosomal subunit. Interacts with L10 and the large rRNA to form the base of the stalk. L10 forms an elongated spine to which L12 dimers bind in a sequential fashion forming a multimeric L10(L12)X complex. Post-translationally, one or more lysine residues are methylated.

Its function is as follows. Forms part of the ribosomal stalk which helps the ribosome interact with GTP-bound translation factors. This is Large ribosomal subunit protein uL11 from Dichelobacter nodosus (strain VCS1703A).